Reading from the N-terminus, the 56-residue chain is Ovomucoid (56 aa).

In terms of domain architecture, Kazal-like spans 6–56 (VDCSEYPKPACTLEYRPLCGSDNKTYANKCNFCNAVVESNGTLTLSHFGKC). 3 cysteine pairs are disulfide-bonded: Cys8–Cys38, Cys16–Cys35, and Cys24–Cys56. N-linked (GlcNAc...) asparagine glycosylation is present at Asn45.

It is found in the secreted. The chain is Ovomucoid from Callipepla californica (California quail).